The primary structure comprises 104 residues: uncharacterized protein (104 aa).

Disordered stretches follow at residues 1–48 (MLRR…NNQP) and 66–104 (QENT…RRCS).

This is an uncharacterized protein from Saccharomyces cerevisiae (strain ATCC 204508 / S288c) (Baker's yeast).